The sequence spans 573 residues: 2-isopropylmalate synthase (573 aa).

The region spanning proline 37 to aspartate 314 is the Pyruvate carboxyltransferase domain. Residues aspartate 46, histidine 253, histidine 255, and asparagine 289 each coordinate Mg(2+). The interval asparagine 456–arginine 573 is regulatory domain.

This sequence belongs to the alpha-IPM synthase/homocitrate synthase family. LeuA type 2 subfamily. As to quaternary structure, homodimer. It depends on Mg(2+) as a cofactor.

The protein localises to the cytoplasm. The catalysed reaction is 3-methyl-2-oxobutanoate + acetyl-CoA + H2O = (2S)-2-isopropylmalate + CoA + H(+). The protein operates within amino-acid biosynthesis; L-leucine biosynthesis; L-leucine from 3-methyl-2-oxobutanoate: step 1/4. Catalyzes the condensation of the acetyl group of acetyl-CoA with 3-methyl-2-oxobutanoate (2-ketoisovalerate) to form 3-carboxy-3-hydroxy-4-methylpentanoate (2-isopropylmalate). This is 2-isopropylmalate synthase from Streptomyces avermitilis (strain ATCC 31267 / DSM 46492 / JCM 5070 / NBRC 14893 / NCIMB 12804 / NRRL 8165 / MA-4680).